We begin with the raw amino-acid sequence, 81 residues long: UPF0434 protein msl4429 (81 aa).

Belongs to the UPF0434 family.

This is UPF0434 protein msl4429 from Mesorhizobium japonicum (strain LMG 29417 / CECT 9101 / MAFF 303099) (Mesorhizobium loti (strain MAFF 303099)).